We begin with the raw amino-acid sequence, 111 residues long: Large ribosomal subunit protein uL22 (111 aa).

It belongs to the universal ribosomal protein uL22 family. In terms of assembly, part of the 50S ribosomal subunit.

In terms of biological role, this protein binds specifically to 23S rRNA; its binding is stimulated by other ribosomal proteins, e.g. L4, L17, and L20. It is important during the early stages of 50S assembly. It makes multiple contacts with different domains of the 23S rRNA in the assembled 50S subunit and ribosome. Functionally, the globular domain of the protein is located near the polypeptide exit tunnel on the outside of the subunit, while an extended beta-hairpin is found that lines the wall of the exit tunnel in the center of the 70S ribosome. This is Large ribosomal subunit protein uL22 from Acholeplasma laidlawii.